Reading from the N-terminus, the 405-residue chain is Potassium channel subfamily K member 13 (405 aa).

The Cytoplasmic segment spans residues 1-19 (MAGRGCGCSPGHLNEDNAR). The chain crosses the membrane as a helical span at residues 20 to 40 (FLLLAGLILLYLLGGAAVFSA). N-linked (GlcNAc...) asparagine glycans are attached at residues Asn59 and Asn65. An intramembrane region (pore-forming) is located at residues 95–115 (WDFTGAFYFVGTVVSTIGFGM). Thr110, Ile111, and Gly112 together coordinate K(+). The interval 110 to 115 (TIGFGM) is selectivity filter 1. Residues 125–145 (IFLIFYGLIGCASTILFFNLF) form a helical membrane-spanning segment. Residues 146 to 193 (LERLITVIACVMRSCHQQQLRRRGAVTQDNMKAPEKGEADSLTGWKPS) are Cytoplasmic-facing. Residues 194-214 (VYYVMLILCLASVAISCGASA) form a helical membrane-spanning segment. The segment at residues 224-244 (YFDSVYFCFVAFSTIGFGDLV) is an intramembrane region (pore-forming). 4 residues coordinate K(+): Thr237, Ile238, Gly239, and Phe240. Residues 237-242 (TIGFGD) form a selectivity filter 2 region. The chain crosses the membrane as a helical span at residues 263–283 (FLILMGVCCIYSLFNVISILI). At 284–405 (KQTVNWILRK…NRLAETSGDR (122 aa)) the chain is on the cytoplasmic side.

This sequence belongs to the two pore domain potassium channel (TC 1.A.1.8) family. In terms of assembly, homodimer. Heterodimer with KCNK12.

It localises to the cell membrane. It catalyses the reaction K(+)(in) = K(+)(out). Functionally, k(+) channel that conducts outward rectifying tonic currents potentiated by purinergic signals. Homo- and heterodimerizes to form functional channels with distinct regulatory and gating properties. Contributes most of K(+) currents at the plasma membrane of resting microglia. Maintains a depolarized membrane potential required for proper ramified microglia morphology and phagocytosis, selectively mediating microglial pruning of presynaptic compartments at hippocampal excitatory synapses. Upon local release of ATP caused by neuronal injury or infection, it is potentiated by P2RY12 and P2RX7 receptor signaling and contributes to ATP-triggered K(+) efflux underlying microglial NLRP3 inflammasome assembly and IL1B release. This Mus musculus (Mouse) protein is Potassium channel subfamily K member 13.